A 2025-amino-acid chain; its full sequence is Pericentriolar material 1 protein (2025 aa).

A disordered region spans residues 1-91 (MATGGGPFEE…TFPHSRYMTQ (91 aa)). Ala2 carries the N-acetylalanine modification. A mediates interaction with DZIP1 region spans residues 2–1458 (ATGGGPFEEV…TWVASNSELT (1457 aa)). A phosphoserine mark is found at Ser65, Ser68, Ser69, Ser93, Ser110, Ser116, Ser119, and Ser159. The segment at 111–140 (DLDQRSIGSDSQGRATAANNKRQLSENRKP) is disordered. Residues 116–132 (SIGSDSQGRATAANNKR) show a composition bias toward polar residues. A coiled-coil region spans residues 218–301 (KASSMREDLV…QLRALQGRQA (84 aa)). Positions 354-390 (RDSQPPAVPDNRRQAESLSLTREISQSRNPSVSEHLP) are disordered. The span at 369-385 (ESLSLTREISQSRNPSV) shows a compositional bias: polar residues. Phosphoserine is present on Ser370. Ser372 bears the Phosphoserine; by PLK4 mark. The residue at position 384 (Ser384) is a Phosphoserine. At Lys399 the chain carries N6-acetyllysine. Coiled-coil stretches lie at residues 399-426 (KMRV…QHLN) and 492-518 (AEKL…YEQT). 2 disordered regions span residues 528–553 (ENTK…VTNI) and 565–586 (VNTN…VNSN). Acidic residues predominate over residues 531–540 (KDEETEESEY). A Phosphoserine modification is found at Ser593. Residues 620-654 (AHGEDEEEEVEEEGVSGASLSSRRSSLVDEAPEDE) form a disordered region. Over residues 623–633 (EDEEEEVEEEG) the composition is skewed to acidic residues. Residues 634–644 (VSGASLSSRRS) are compositionally biased toward low complexity. Position 644 is a phosphoserine (Ser644). 2 coiled-coil regions span residues 652–772 (EDEE…PDLQ) and 822–856 (SDMR…GLAE). Residue Thr857 is modified to Phosphothreonine. 4 positions are modified to phosphoserine: Ser859, Ser864, Ser867, and Ser870. Disordered stretches follow at residues 866–885 (RSDG…EKTM) and 913–940 (TDEE…NQNS). A compositionally biased stretch (polar residues) spans 870–879 (SENLCTPQQS). Residue Thr875 is modified to Phosphothreonine. A phosphoserine mark is found at Ser957, Ser974, Ser985, and Ser988. Coiled-coil stretches lie at residues 985–1017 (SELS…CQTL) and 1061–1086 (QLTW…QNQH). Disordered regions lie at residues 1081-1105 (RQQN…PSSP) and 1149-1213 (FSQN…YDQE). Residues 1086 to 1096 (HPEKPRSKERG) show a composition bias toward basic and acidic residues. Positions 1149-1169 (FSQNVSTPTEQQQPLAQNPSG) are enriched in polar residues. 2 positions are modified to phosphoserine: Ser1182 and Ser1185. Residues 1189-1198 (EKQRNQKQPE) show a composition bias toward basic and acidic residues. 5 positions are modified to phosphoserine: Ser1228, Ser1254, Ser1257, Ser1259, and Ser1260. Residues 1230-1310 (EKATNSNRKN…STQLKSRVKN (81 aa)) form a disordered region. The span at 1268 to 1285 (TTVTKTFKTRKASAQASL) shows a compositional bias: polar residues. 2 positions are modified to phosphoserine: Ser1315 and Ser1317. Positions 1319–1338 (SSTCEPCKNRNRHSAQTEEP) are disordered. A Phosphothreonine modification is found at Thr1466. Phosphoserine occurs at positions 1571, 1695, 1729, 1766, 1769, 1777, and 1783. Residues 1720–1943 (KRILEGDHGS…AGSPDTESPV (224 aa)) are disordered. The span at 1756–1768 (YDAKGPKNVRSDV) shows a compositional bias: basic and acidic residues. Residues 1784–1798 (INLSKAESQALTNYG) are compositionally biased toward polar residues. The segment covering 1800-1816 (GEDENEDEEMEDFEESP) has biased composition (acidic residues). 4 stretches are compositionally biased toward polar residues: residues 1818–1828 (DIQTSLQANTE), 1849–1858 (ESTNVPSDQE), 1879–1901 (ENEQ…SSKQ), and 1925–1934 (AQETPESSLA). A phosphoserine mark is found at Ser1959 and Ser1978.

The protein belongs to the PCM1 family. As to quaternary structure, self-associates. Interacts with BBS4, BBS8, CETN3, HAP1, NDE1, NDEL1, MAP1LC3B, GABARAPAL2, and GABARAP. Interacts with CEP131; the interaction increases in response to ultraviolet light (UV) radiation. Associates with microtubule; association to microtubule is reduced in response to cellular stress, such as ultraviolet light (UV) radiation or heat shock, in a process that requires p38 MAP kinase signaling. Interacts with C2CD3. Interacts with CFAP263. Interacts with SSX2IP. Interacts with CCDC13. Interacts with CEP290. Interacts with PARD6A. Interacts with KIAA0753/OFIP, CEP20/FOR20 and OFD1; the interaction with CEP20/FOR20 and OFD1 may be mediated by KIAA0753/OFIP. Interacts with CCDC66. Interacts with CCDC61. Interacts with DZIP1; localizes DZIP1 and the associated BBSome to centriolar satellite. Interacts with CSTPP1, TTLL1, TPGS1 and LRRC49. Interacts with CFAP53. Post-translationally, ubiquitinated. Undergoes monoubiquitination catalyzed by the E3 ubiquitin-protein ligase MIB1 in proliferating cells, preventing cilia formation. Monoubiquitination by MIB1 is inhibited in response to cellular stress, such as ultraviolet light (UV) radiation or heat shock, resulting in cilia formation initiation. Phosphorylated on multiple serine and threonine residues by DYRK3 during the G2-to-M transition, after the nuclear-envelope breakdown. Phosphorylation by DYRK3 promotes disassembly of pericentriolar material. Phosphorylation at Ser-372 mediated by PLK4 is required to maintain the integrity of centriolar satellites. In terms of tissue distribution, expressed in the hippocampus and dentate gyrus, the columnar epithelial cells of bronchioles, the olfactory epithelium, the pericardium and the inner segment of the retina.

The protein resides in the cytoplasm. It localises to the cytoskeleton. The protein localises to the microtubule organizing center. It is found in the centrosome. Its subcellular location is the cytoplasmic granule. The protein resides in the centriolar satellite. It localises to the cilium basal body. Functionally, required for centrosome assembly and function. Essential for the correct localization of several centrosomal proteins including CEP250, CETN3, PCNT and NEK2. Required to anchor microtubules to the centrosome. Also involved in cilium biogenesis by recruiting the BBSome, a ciliary protein complex involved in cilium biogenesis, to the centriolar satellites. Recruits the tubulin polyglutamylase complex (TPGC) to centriolar satellites. This chain is Pericentriolar material 1 protein, found in Mus musculus (Mouse).